Here is a 524-residue protein sequence, read N- to C-terminus: Importin subunit alpha-1 (524 aa).

Residues 1–42 (MGDEFRPSHEERSKMYKSNVRDQNEMRRKRREDEVQIRKNRR) form a disordered region. The 59-residue stretch at 1–59 (MGDEFRPSHEERSKMYKSNVRDQNEMRRKRREDEVQIRKNRRDEKFERNRQITVQRSLS) folds into the IBB domain.

The protein belongs to the importin alpha family. As to quaternary structure, forms a complex with an importin beta subunit. In terms of tissue distribution, adult germline tissues.

The protein resides in the cytoplasm. Binds specifically and directly to substrates containing either a simple or bipartite NLS motif. Promotes docking of import substrates to the nuclear envelope. Seems to act as a cytosolic receptor for both simple and bipartite NLS motifs. This Caenorhabditis elegans protein is Importin subunit alpha-1 (ima-1).